Reading from the N-terminus, the 23-residue chain is Brevinin-1Eb (23 aa).

Cys-17 and Cys-23 are joined by a disulfide.

It belongs to the frog skin active peptide (FSAP) family. Brevinin subfamily. As to expression, expressed by the skin glands.

It localises to the secreted. Its function is as follows. Shows antibacterial activity against representative Gram-negative and Gram-positive bacterial species, and a very high hemolytic activity. The sequence is that of Brevinin-1Eb from Pelophylax lessonae (Pool frog).